Here is a 62-residue protein sequence, read N- to C-terminus: uncharacterized protein (62 aa).

The disordered stretch occupies residues 1–26 (MGELAASANHGHSPCYPERKGTPGDL). Basic and acidic residues predominate over residues 17 to 26 (PERKGTPGDL).

This is an uncharacterized protein from Homo sapiens (Human).